Here is a 317-residue protein sequence, read N- to C-terminus: tRNA uridine(34) hydroxylase (317 aa).

A Rhodanese domain is found at 129 to 223 (TDPEVLLIDT…YLEEVPEQES (95 aa)). Residue Cys183 is the Cysteine persulfide intermediate of the active site. Residues 298–317 (AKARNQPHPIGRNYRLPSEA) form a disordered region.

This sequence belongs to the TrhO family.

The enzyme catalyses uridine(34) in tRNA + AH2 + O2 = 5-hydroxyuridine(34) in tRNA + A + H2O. Functionally, catalyzes oxygen-dependent 5-hydroxyuridine (ho5U) modification at position 34 in tRNAs. The chain is tRNA uridine(34) hydroxylase from Pseudomonas syringae pv. tomato (strain ATCC BAA-871 / DC3000).